The chain runs to 208 residues: Putative ankyrin repeat protein Ta0196 (208 aa).

ANK repeat units lie at residues 49 to 78 (YQRN…HIDD), 82 to 111 (EGNT…SIDI), 115 to 144 (AGNT…NINI), and 148 to 177 (EGDT…DLNA).

The chain is Putative ankyrin repeat protein Ta0196 from Thermoplasma acidophilum (strain ATCC 25905 / DSM 1728 / JCM 9062 / NBRC 15155 / AMRC-C165).